An 847-amino-acid chain; its full sequence is Mitogen-activated protein kinase kinase kinase 11 (847 aa).

At serine 11 the chain carries Phosphoserine. The tract at residues 11–38 (SPLGSWNGSGSGGGGGGGGGRPEGSPKA) is disordered. Over residues 17-32 (NGSGSGGGGGGGGGRP) the composition is skewed to gly residues. Residue serine 35 is modified to Phosphoserine. An SH3 domain is found at 41–105 (YANPVWTALF…PSNYVSRGGG (65 aa)). In terms of domain architecture, Protein kinase spans 117 to 379 (LRLEEVIGIG…ASILQQLEAL (263 aa)). ATP-binding positions include 123-131 (IGIGGFGKV) and lysine 144. The active-site Proton acceptor is the aspartate 241. Phosphothreonine; by autocatalysis is present on threonine 277. The residue at position 281 (serine 281) is a Phosphoserine; by autocatalysis and MAP4K1. Phosphoserine is present on serine 394. Leucine-zipper stretches follow at residues 403-424 (IQGLFDELRAKEKELLSREEEL) and 438-459 (LRRREHLLAQWELEVFERELTL). Phosphoserine occurs at positions 507, 524, 548, 555, and 556. The tract at residues 537-643 (PAEPGQAWGR…SSGTPKLIQR (107 aa)) is disordered. Basic and acidic residues predominate over residues 550 to 562 (RRLEDSSNGERRA). Over residues 597-609 (SSPLGSPSTPPAL) the composition is skewed to low complexity. Phosphoserine is present on residues serine 654, serine 693, and serine 705. A disordered region spans residues 655-847 (LGLGRDLQPP…QAPWVPEAGP (193 aa)). The segment covering 676–694 (TTPPTPTPAPCPTEPPPSP) has biased composition (pro residues). Position 708 is a phosphothreonine (threonine 708). A phosphoserine mark is found at serine 724, serine 727, serine 740, serine 748, serine 758, serine 770, serine 789, serine 793, and serine 815. The segment covering 760 to 773 (PLGLISRPRPSPLR) has biased composition (low complexity). The segment covering 787–799 (RPSPLPSPQPAPR) has biased composition (pro residues). A compositionally biased stretch (low complexity) spans 800–816 (RAPWTLFPDSDPFWDSP).

Belongs to the protein kinase superfamily. STE Ser/Thr protein kinase family. MAP kinase kinase kinase subfamily. In terms of assembly, homodimer; undergoes dimerization during activation. Interacts with MAP2K4/MKK4. Interacts with MAP2K7/MKK7. Found in a complex with SH3RF1, RAC1, MAP2K7/MKK7, MAPK8IP1/JIP1 and MAPK8/JNK1. It depends on Mg(2+) as a cofactor. In terms of processing, autophosphorylation on serine and threonine residues within the activation loop plays a role in enzyme activation. Thr-277 is likely to be the main autophosphorylation site. Phosphorylation of Ser-555 and Ser-556 is induced by CDC42. Expressed in a wide variety of normal and neoplastic tissues including fetal lung, liver, heart and kidney, and adult lung, liver, heart, kidney, placenta, skeletal muscle, pancreas and brain.

The protein resides in the cytoplasm. The protein localises to the cytoskeleton. Its subcellular location is the microtubule organizing center. It is found in the centrosome. It catalyses the reaction L-seryl-[protein] + ATP = O-phospho-L-seryl-[protein] + ADP + H(+). The catalysed reaction is L-threonyl-[protein] + ATP = O-phospho-L-threonyl-[protein] + ADP + H(+). Homodimerization via the leucine zipper domains is required for autophosphorylation and subsequent activation. In terms of biological role, activates the JUN N-terminal pathway. Required for serum-stimulated cell proliferation and for mitogen and cytokine activation of MAPK14 (p38), MAPK3 (ERK) and MAPK8 (JNK1) through phosphorylation and activation of MAP2K4/MKK4 and MAP2K7/MKK7. Plays a role in mitogen-stimulated phosphorylation and activation of BRAF, but does not phosphorylate BRAF directly. Influences microtubule organization during the cell cycle. This Homo sapiens (Human) protein is Mitogen-activated protein kinase kinase kinase 11.